We begin with the raw amino-acid sequence, 676 residues long: Envelope fusion protein (676 aa).

Positions Met1–Ala16 are cleaved as a signal peptide. Residues Asn76 and Asn87 are each glycosylated (N-linked (GlcNAc...) asparagine; by host). The stretch at Ala169–Gly215 forms a coiled coil. N-linked (GlcNAc...) asparagine; by host glycans are attached at residues Asn266, Asn469, Asn505, and Asn548. A helical transmembrane segment spans residues Cys577–Phe597. The N-linked (GlcNAc...) asparagine; by host glycan is linked to Asn628.

Post-translationally, N-glycosylated.

It is found in the virion membrane. Its subcellular location is the host cell membrane. In terms of biological role, envelope glycoprotein which mediates the fusion of viral and host endosomal membranes leading to virus entry into the host cell. In Lepidoptera (butterflies and moths), this protein is Envelope fusion protein.